We begin with the raw amino-acid sequence, 55 residues long: Large ribosomal subunit protein bL33 (55 aa).

The protein belongs to the bacterial ribosomal protein bL33 family.

In Granulibacter bethesdensis (strain ATCC BAA-1260 / CGDNIH1), this protein is Large ribosomal subunit protein bL33.